The chain runs to 125 residues: Small ribosomal subunit protein uS13 (125 aa).

A disordered region spans residues 92-125 (RRSLPVRGQRTQTNARTRKGKRKTVAGKKKATKK). The span at 107–125 (RTRKGKRKTVAGKKKATKK) shows a compositional bias: basic residues.

This sequence belongs to the universal ribosomal protein uS13 family. In terms of assembly, part of the 30S ribosomal subunit. Forms a loose heterodimer with protein S19. Forms two bridges to the 50S subunit in the 70S ribosome.

Its function is as follows. Located at the top of the head of the 30S subunit, it contacts several helices of the 16S rRNA. In the 70S ribosome it contacts the 23S rRNA (bridge B1a) and protein L5 of the 50S subunit (bridge B1b), connecting the 2 subunits; these bridges are implicated in subunit movement. Contacts the tRNAs in the A and P-sites. In Chlorobium limicola (strain DSM 245 / NBRC 103803 / 6330), this protein is Small ribosomal subunit protein uS13.